A 311-amino-acid chain; its full sequence is MSVVNNRVALTNLVSMEALTTEEVLGLINRGSEYKAGKVVISDHQKDLVANLFFENSTRTHKSFEVAEKKLGLTVLDFNADASAVNKGESLYDTVLTMSALGTDICVIRHPEDDYYKELVESPTITASIVNGGDGSGQHPSQCLLDLLTIYEEFGRFEGLKIAIAGDLTHSRVAKSNMQILKRLGAELYFYGPEEWYSEAFNAYGTYIAIDQIIKELDVLMLLRVQHERHDGHQSFSKESYHQAFGLTQERYQQLKDSAIIMHPAPVNRDVEIADSLVEAPKARIVSQMANGVFVRMAIIEAILNGRNKNS.

Residues Arg-59 and Thr-60 each coordinate carbamoyl phosphate. Residue Lys-87 coordinates L-aspartate. Residues Arg-109, His-139, and Gln-142 each coordinate carbamoyl phosphate. L-aspartate is bound by residues Arg-172 and Arg-224. Carbamoyl phosphate-binding residues include Ala-265 and Pro-266.

Belongs to the aspartate/ornithine carbamoyltransferase superfamily. ATCase family. In terms of assembly, heterododecamer (2C3:3R2) of six catalytic PyrB chains organized as two trimers (C3), and six regulatory PyrI chains organized as three dimers (R2).

It catalyses the reaction carbamoyl phosphate + L-aspartate = N-carbamoyl-L-aspartate + phosphate + H(+). It participates in pyrimidine metabolism; UMP biosynthesis via de novo pathway; (S)-dihydroorotate from bicarbonate: step 2/3. In terms of biological role, catalyzes the condensation of carbamoyl phosphate and aspartate to form carbamoyl aspartate and inorganic phosphate, the committed step in the de novo pyrimidine nucleotide biosynthesis pathway. The chain is Aspartate carbamoyltransferase catalytic subunit from Streptococcus pyogenes serotype M4 (strain MGAS10750).